A 156-amino-acid chain; its full sequence is Arginine repressor (156 aa).

Belongs to the ArgR family.

The protein resides in the cytoplasm. Its pathway is amino-acid biosynthesis; L-arginine biosynthesis [regulation]. Functionally, regulates arginine biosynthesis genes. The sequence is that of Arginine repressor from Vibrio campbellii (strain ATCC BAA-1116).